A 133-amino-acid chain; its full sequence is Phosphoribosyl-AMP cyclohydrolase (133 aa).

Asp-77 serves as a coordination point for Mg(2+). Cys-78 provides a ligand contact to Zn(2+). The Mg(2+) site is built by Asp-79 and Asp-81. Residues Cys-95 and Cys-102 each coordinate Zn(2+).

It belongs to the PRA-CH family. As to quaternary structure, homodimer. Requires Mg(2+) as cofactor. The cofactor is Zn(2+).

Its subcellular location is the cytoplasm. The enzyme catalyses 1-(5-phospho-beta-D-ribosyl)-5'-AMP + H2O = 1-(5-phospho-beta-D-ribosyl)-5-[(5-phospho-beta-D-ribosylamino)methylideneamino]imidazole-4-carboxamide. It participates in amino-acid biosynthesis; L-histidine biosynthesis; L-histidine from 5-phospho-alpha-D-ribose 1-diphosphate: step 3/9. Functionally, catalyzes the hydrolysis of the adenine ring of phosphoribosyl-AMP. The protein is Phosphoribosyl-AMP cyclohydrolase of Azotobacter chroococcum mcd 1.